The chain runs to 181 residues: tRNA (cytidine(56)-2'-O)-methyltransferase (181 aa).

Residues L88, 115–119, and 133–140 each bind S-adenosyl-L-methionine; these read GGEKV and IGNQPHSE.

This sequence belongs to the aTrm56 family. As to quaternary structure, homodimer.

Its subcellular location is the cytoplasm. It catalyses the reaction cytidine(56) in tRNA + S-adenosyl-L-methionine = 2'-O-methylcytidine(56) in tRNA + S-adenosyl-L-homocysteine + H(+). In terms of biological role, specifically catalyzes the AdoMet-dependent 2'-O-ribose methylation of cytidine at position 56 in tRNAs. This chain is tRNA (cytidine(56)-2'-O)-methyltransferase, found in Thermofilum pendens (strain DSM 2475 / Hrk 5).